A 1609-amino-acid chain; its full sequence is Probable outer membrane protein pmp21 (1609 aa).

Residues 1–30 (MVAKKTVRSYRSSFSHSVIVAILSAGIAFE) form the signal peptide. The segment covering 132 to 145 (FSQPTQEPDTSNAV) has biased composition (polar residues). 2 disordered regions span residues 132–183 (FSQP…KSPE) and 640–677 (TAPV…EVPP). 2 stretches are compositionally biased toward basic and acidic residues: residues 149 to 175 (ISSD…KEVS) and 651 to 672 (NKDE…KTVE). An Autotransporter domain is found at 1328-1609 (ELDFSTNVWG…DFNGGIRIIF (282 aa)).

It belongs to the PMP outer membrane protein family.

It is found in the secreted. The protein resides in the cell wall. The protein localises to the cell outer membrane. This chain is Probable outer membrane protein pmp21 (pmp21), found in Chlamydia pneumoniae (Chlamydophila pneumoniae).